The primary structure comprises 171 residues: Myelin basic protein (171 aa).

At Ala1 the chain carries N-acetylalanine. A phosphoserine mark is found at Ser7 and Ser12. Phosphotyrosine is present on Tyr14. Residue Thr17 is modified to Phosphothreonine. Ser19 is modified (phosphoserine). At Thr20 the chain carries Phosphothreonine. Citrulline occurs at positions 25 and 31. Thr35 carries the post-translational modification Phosphothreonine. A Phosphoserine modification is found at Ser40. 2 positions are modified to omega-N-methylarginine: Arg43 and Arg49. A disordered region spans residues 44–115 (FFGGDRGAPK…GRGLSLSRFS (72 aa)). Ser56 carries the post-translational modification Phosphoserine. Position 69 is a phosphotyrosine (Tyr69). A Phosphoserine modification is found at Ser76. A phosphothreonine mark is found at Thr80, Thr95, and Thr98. Gln103 is modified (deamidated glutamine). An Omega-N-methylarginine; alternate modification is found at Arg107. At Arg107 the chain carries Symmetric dimethylarginine; alternate. A Phosphoserine modification is found at Ser115. Citrulline occurs at positions 122 and 130. A Deamidated glutamine modification is found at Gln148. Residue Arg160 is modified to Citrulline. A Phosphoserine modification is found at Ser162. Residue Ser166 is modified to Phosphoserine; by UHMK1. At Arg171 the chain carries Citrulline.

Belongs to the myelin basic protein family. In terms of assembly, homodimer. In terms of processing, as in other animals, several charge isomers may be produced as a result of optional post-translational modifications, such as phosphorylation of serine or threonine residues, deamidation of glutamine or asparagine residues, citrullination and methylation of arginine residues. Post-translationally, phosphorylated by TAOK2, VRK2, MAPK11, MAPK12, MAPK14 and MINK1. Proteolytically cleaved in B cell lysosomes by cathepsin CTSG which degrades the major immunogenic MBP epitope and prevents the activation of MBP-specific autoreactive T cells.

Its subcellular location is the myelin membrane. Its function is as follows. Is, with PLP, the most abundant protein component of the myelin membrane in the CNS. Has a role in both the formation and stabilization of this compact multilayer arrangement of bilayers. Each splice variant and charge isomer may have a specialized function in the assembly of an optimized, biochemically functional myelin membrane. The polypeptide is Myelin basic protein (MBP) (Pan troglodytes (Chimpanzee)).